We begin with the raw amino-acid sequence, 82 residues long: Antitoxin MazE2 (82 aa).

Probably forms a complex with cognate toxin MazF2.

Antitoxin component of a type II toxin-antitoxin (TA) system. Labile antitoxin that binds to cognate MazF2 toxin and counteracts its endoribonuclease activity. The protein is Antitoxin MazE2 (mazE2) of Mycobacterium bovis (strain ATCC BAA-935 / AF2122/97).